A 511-amino-acid polypeptide reads, in one-letter code: Maturase K (511 aa).

It belongs to the intron maturase 2 family. MatK subfamily.

It localises to the plastid. Its subcellular location is the chloroplast. Functionally, usually encoded in the trnK tRNA gene intron. Probably assists in splicing its own and other chloroplast group II introns. The chain is Maturase K from Hordeum vulgare subsp. spontaneum (Wild barley).